An 83-amino-acid polypeptide reads, in one-letter code: RNA-binding protein Hfq (83 aa).

The Sm domain occupies 11–71 (DVFLNYIRKN…ISTIMPASPV (61 aa)).

The protein belongs to the Hfq family. As to quaternary structure, homohexamer.

Its function is as follows. RNA chaperone that binds small regulatory RNA (sRNAs) and mRNAs to facilitate mRNA translational regulation in response to envelope stress, environmental stress and changes in metabolite concentrations. Also binds with high specificity to tRNAs. The sequence is that of RNA-binding protein Hfq from Rhodospirillum rubrum (strain ATCC 11170 / ATH 1.1.1 / DSM 467 / LMG 4362 / NCIMB 8255 / S1).